Consider the following 154-residue polypeptide: MAPPAKVAKKPDGKAQALKVAKAVKSGVSTLQKKAKKIRTSVTFHRPKTLKKDRNPKYPRISAPPRNKLDHYQILKYPLTTESAMKKIEDNNTLVFIVDIRADKKKIKAAVKKMYDIQTKKVNTLIRPDGTKKAYVRLTPDYDALDIANKIGII.

This sequence belongs to the universal ribosomal protein uL23 family.

Its function is as follows. This protein binds to a specific region on the 26S rRNA. The polypeptide is Large ribosomal subunit protein uL23 (RPL23A) (Fritillaria agrestis (Stinkbells)).